The following is a 544-amino-acid chain: CTP synthase (544 aa).

The tract at residues 1-265 (MARFIFITGG…DKAVLSAFGL (265 aa)) is amidoligase domain. Position 13 (Ser-13) interacts with CTP. Ser-13 lines the UTP pocket. 14-19 (SLGKGL) contributes to the ATP binding site. Residue Tyr-54 participates in L-glutamine binding. ATP is bound at residue Asp-71. 2 residues coordinate Mg(2+): Asp-71 and Glu-139. CTP is bound by residues 146–148 (DIE), 186–191 (KTKPTQ), and Lys-222. UTP-binding positions include 186–191 (KTKPTQ) and Lys-222. The 253-residue stretch at 291–543 (TIGVVGKYVG…VAAALKQSRL (253 aa)) folds into the Glutamine amidotransferase type-1 domain. Gly-355 serves as a coordination point for L-glutamine. The active-site Nucleophile; for glutamine hydrolysis is the Cys-382. L-glutamine is bound by residues 383 to 386 (LGMQ), Glu-406, and Arg-471. Active-site residues include His-516 and Glu-518.

It belongs to the CTP synthase family. Homotetramer.

It carries out the reaction UTP + L-glutamine + ATP + H2O = CTP + L-glutamate + ADP + phosphate + 2 H(+). It catalyses the reaction L-glutamine + H2O = L-glutamate + NH4(+). The catalysed reaction is UTP + NH4(+) + ATP = CTP + ADP + phosphate + 2 H(+). Its pathway is pyrimidine metabolism; CTP biosynthesis via de novo pathway; CTP from UDP: step 2/2. Its activity is regulated as follows. Allosterically activated by GTP, when glutamine is the substrate; GTP has no effect on the reaction when ammonia is the substrate. The allosteric effector GTP functions by stabilizing the protein conformation that binds the tetrahedral intermediate(s) formed during glutamine hydrolysis. Inhibited by the product CTP, via allosteric rather than competitive inhibition. Functionally, catalyzes the ATP-dependent amination of UTP to CTP with either L-glutamine or ammonia as the source of nitrogen. Regulates intracellular CTP levels through interactions with the four ribonucleotide triphosphates. In Zymomonas mobilis subsp. mobilis (strain ATCC 31821 / ZM4 / CP4), this protein is CTP synthase.